We begin with the raw amino-acid sequence, 28 residues long: Dermaseptin-2.2TR (28 aa).

Expressed by the skin glands.

It localises to the secreted. In terms of biological role, has antimicrobial activity. The chain is Dermaseptin-2.2TR from Phyllomedusa trinitatis (Trinidad leaf frog).